The chain runs to 504 residues: Anaerobic nitric oxide reductase transcription regulator NorR (504 aa).

Asp-57 carries the post-translational modification 4-aspartylphosphate. In terms of domain architecture, Sigma-54 factor interaction spans 187–416; the sequence is MIGLSPGMTQ…LEHAIHRAVV (230 aa). ATP contacts are provided by residues 215 to 222 and 278 to 287; these read GETGTGKE and ADNGTLFLDE. The segment at residues 479 to 498 is a DNA-binding region (H-T-H motif); it reads WAACARMLETDVANLHRLAK.

It functions in the pathway nitrogen metabolism; nitric oxide reduction. Required for the expression of anaerobic nitric oxide (NO) reductase, acts as a transcriptional activator for at least the norVW operon. Activation also requires sigma-54. This Escherichia coli O8 (strain IAI1) protein is Anaerobic nitric oxide reductase transcription regulator NorR.